The chain runs to 135 residues: Large ribosomal subunit protein uL16c (135 aa).

Basic residues predominate over residues 1–17 (MLSPKRTRFRKQHRGRM). Residues 1-21 (MLSPKRTRFRKQHRGRMKGVS) form a disordered region.

It belongs to the universal ribosomal protein uL16 family. As to quaternary structure, part of the 50S ribosomal subunit.

It localises to the plastid. The protein resides in the chloroplast. This Amborella trichopoda protein is Large ribosomal subunit protein uL16c.